A 340-amino-acid polypeptide reads, in one-letter code: Phosphate acyltransferase (340 aa).

This sequence belongs to the PlsX family. In terms of assembly, homodimer. Probably interacts with PlsY.

The protein localises to the cytoplasm. It catalyses the reaction a fatty acyl-[ACP] + phosphate = an acyl phosphate + holo-[ACP]. The protein operates within lipid metabolism; phospholipid metabolism. Its function is as follows. Catalyzes the reversible formation of acyl-phosphate (acyl-PO(4)) from acyl-[acyl-carrier-protein] (acyl-ACP). This enzyme utilizes acyl-ACP as fatty acyl donor, but not acyl-CoA. This chain is Phosphate acyltransferase, found in Pseudomonas syringae pv. syringae (strain B728a).